An 880-amino-acid chain; its full sequence is Leucine--tRNA ligase (880 aa).

Residues 46–56 carry the 'HIGH' region motif; the sequence is PYPSGALHMGH. The 'KMSKS' region motif lies at 638–642; sequence KMSKS. Lys641 serves as a coordination point for ATP.

The protein belongs to the class-I aminoacyl-tRNA synthetase family.

The protein localises to the cytoplasm. The enzyme catalyses tRNA(Leu) + L-leucine + ATP = L-leucyl-tRNA(Leu) + AMP + diphosphate. The polypeptide is Leucine--tRNA ligase (Xanthomonas oryzae pv. oryzae (strain KACC10331 / KXO85)).